Reading from the N-terminus, the 464-residue chain is Cysteine--tRNA ligase (464 aa).

Residue cysteine 28 coordinates Zn(2+). A 'HIGH' region motif is present at residues 30-40; the sequence is PTVYDTAHIGN. Cysteine 212, histidine 237, and glutamate 241 together coordinate Zn(2+). The short motif at 270–274 is the 'KMSKS' region element; that stretch reads KMSKS. Lysine 273 serves as a coordination point for ATP.

The protein belongs to the class-I aminoacyl-tRNA synthetase family. In terms of assembly, monomer. The cofactor is Zn(2+).

Its subcellular location is the cytoplasm. It carries out the reaction tRNA(Cys) + L-cysteine + ATP = L-cysteinyl-tRNA(Cys) + AMP + diphosphate. The polypeptide is Cysteine--tRNA ligase (Wolbachia pipientis subsp. Culex pipiens (strain wPip)).